Here is a 201-residue protein sequence, read N- to C-terminus: Imidazole glycerol phosphate synthase subunit HisH 1 (201 aa).

In terms of domain architecture, Glutamine amidotransferase type-1 spans 1–201 (MIALIDYKAG…LKLLENFARL (201 aa)). Catalysis depends on C80, which acts as the Nucleophile. Catalysis depends on residues H183 and E185.

Heterodimer of HisH and HisF.

The protein resides in the cytoplasm. It catalyses the reaction 5-[(5-phospho-1-deoxy-D-ribulos-1-ylimino)methylamino]-1-(5-phospho-beta-D-ribosyl)imidazole-4-carboxamide + L-glutamine = D-erythro-1-(imidazol-4-yl)glycerol 3-phosphate + 5-amino-1-(5-phospho-beta-D-ribosyl)imidazole-4-carboxamide + L-glutamate + H(+). It carries out the reaction L-glutamine + H2O = L-glutamate + NH4(+). It functions in the pathway amino-acid biosynthesis; L-histidine biosynthesis; L-histidine from 5-phospho-alpha-D-ribose 1-diphosphate: step 5/9. Functionally, IGPS catalyzes the conversion of PRFAR and glutamine to IGP, AICAR and glutamate. The HisH subunit provides the glutamine amidotransferase activity that produces the ammonia necessary to HisF for the synthesis of IGP and AICAR. This chain is Imidazole glycerol phosphate synthase subunit HisH 1 (hisH1), found in Campylobacter jejuni subsp. jejuni serotype O:23/36 (strain 81-176).